The following is a 340-amino-acid chain: Aldose 1-epimerase (340 aa).

Arg-77 contacts substrate. His-172 functions as the Proton donor in the catalytic mechanism. A substrate-binding site is contributed by Asp-243. Residue Glu-305 is the Proton acceptor of the active site.

Belongs to the aldose epimerase family.

The protein localises to the cytoplasm. It catalyses the reaction alpha-D-glucose = beta-D-glucose. It participates in carbohydrate metabolism; hexose metabolism. Mutarotase converts alpha-aldose to the beta-anomer. It is active on D-glucose, L-arabinose, D-xylose, D-galactose, maltose and lactose. This chain is Aldose 1-epimerase (galM), found in Haemophilus influenzae (strain ATCC 51907 / DSM 11121 / KW20 / Rd).